Reading from the N-terminus, the 406-residue chain is Digeranylgeranylglycerophospholipid reductase 2 (406 aa).

FAD contacts are provided by G15, E34, C45, A46, G48, R99, A123, D279, G291, and I292.

Belongs to the geranylgeranyl reductase family. DGGGPL reductase subfamily. It depends on FAD as a cofactor.

It catalyses the reaction a 2,3-bis-O-phytanyl-sn-glycerol 1-phospholipid + 8 oxidized 2[4Fe-4S]-[ferredoxin] = a 2,3-bis-O-(geranylgeranyl)-sn-glycerol 1-phospholipid + 8 reduced 2[4Fe-4S]-[ferredoxin] + 16 H(+). The catalysed reaction is 2,3-bis-O-(phytanyl)-sn-glycerol 1-phosphate + 8 oxidized 2[4Fe-4S]-[ferredoxin] = 2,3-bis-O-(geranylgeranyl)-sn-glycerol 1-phosphate + 8 reduced 2[4Fe-4S]-[ferredoxin] + 16 H(+). The enzyme catalyses a 2,3-bis-O-phytanyl-sn-glycerol 1-phospholipid + 8 A = a 2,3-bis-O-(geranylgeranyl)-sn-glycerol 1-phospholipid + 8 AH2. It carries out the reaction CDP-2,3-bis-O-(geranylgeranyl)-sn-glycerol + 8 AH2 = CDP-2,3-bis-O-(phytanyl)-sn-glycerol + 8 A. It catalyses the reaction archaetidylserine + 8 AH2 = 2,3-bis-O-phytanyl-sn-glycero-3-phospho-L-serine + 8 A. Its pathway is membrane lipid metabolism; glycerophospholipid metabolism. In terms of biological role, is involved in the reduction of 2,3-digeranylgeranylglycerophospholipids (unsaturated archaeols) into 2,3-diphytanylglycerophospholipids (saturated archaeols) in the biosynthesis of archaeal membrane lipids. Catalyzes the formation of archaetidic acid (2,3-di-O-phytanyl-sn-glyceryl phosphate) from 2,3-di-O-geranylgeranylglyceryl phosphate (DGGGP) via the hydrogenation of each double bond of the isoprenoid chains. Is also probably able to reduce double bonds of geranyl groups in CDP-2,3-bis-O-(geranylgeranyl)-sn-glycerol and archaetidylserine, thus acting at various stages in the biosynthesis of archaeal membrane lipids. The polypeptide is Digeranylgeranylglycerophospholipid reductase 2 (Methanococcoides burtonii (strain DSM 6242 / NBRC 107633 / OCM 468 / ACE-M)).